The following is a 563-amino-acid chain: Arginine--tRNA ligase (563 aa).

Residues 121 to 131 (PNIAKPFSIGH) carry the 'HIGH' region motif.

It belongs to the class-I aminoacyl-tRNA synthetase family. Monomer.

It is found in the cytoplasm. It catalyses the reaction tRNA(Arg) + L-arginine + ATP = L-arginyl-tRNA(Arg) + AMP + diphosphate. The polypeptide is Arginine--tRNA ligase (Streptococcus pyogenes serotype M2 (strain MGAS10270)).